A 266-amino-acid polypeptide reads, in one-letter code: Glycine--tRNA ligase beta subunit (266 aa).

The protein belongs to the class-II aminoacyl-tRNA synthetase family. In terms of assembly, tetramer of two alpha and two beta subunits.

The protein resides in the cytoplasm. It carries out the reaction tRNA(Gly) + glycine + ATP = glycyl-tRNA(Gly) + AMP + diphosphate. This is Glycine--tRNA ligase beta subunit (glyS) from Moraxella catarrhalis (Branhamella catarrhalis).